The primary structure comprises 272 residues: Ras-related protein RSR1 (272 aa).

10–17 contributes to the GTP binding site; the sequence is GAGGVGKS. Positions 32-40 match the Effector region motif; that stretch reads YDPTIEDSY. Residues 57–61 and 116–119 contribute to the GTP site; these read DTAGI and NKAD. Positions 177 to 272 are disordered; that stretch reads DARNQSQQFS…KKNASTCTIL (96 aa). Composition is skewed to polar residues over residues 180 to 232 and 245 to 258; these read NQSQ…STPV and SGSSNRTGISATSQ. Cysteine 269 bears the Cysteine methyl ester mark. Cysteine 269 carries the S-geranylgeranyl cysteine lipid modification. Positions 270-272 are cleaved as a propeptide — removed in mature form; the sequence is TIL.

Belongs to the small GTPase superfamily. Ras family.

It is found in the cell membrane. It catalyses the reaction GTP + H2O = GDP + phosphate + H(+). Its activity is regulated as follows. Alternates between an inactive form bound to GDP and an active form bound to GTP. Activated by a guanine nucleotide-exchange factor (GEF) and inactivated by a GTPase-activating protein (GAP). Ras-related protein which binds GDP/GTP and possesses intrinsic GTPase activity. Involved in development of cell polarity during the cell division cycle, and essential for bud emergence. This Saccharomyces cerevisiae (strain ATCC 204508 / S288c) (Baker's yeast) protein is Ras-related protein RSR1.